The chain runs to 402 residues: S-adenosylmethionine synthase (402 aa).

An ATP-binding site is contributed by 140–145 (GNGSID).

This sequence belongs to the AdoMet synthase 2 family. Requires Mg(2+) as cofactor.

It catalyses the reaction L-methionine + ATP + H2O = S-adenosyl-L-methionine + phosphate + diphosphate. It participates in amino-acid biosynthesis; S-adenosyl-L-methionine biosynthesis; S-adenosyl-L-methionine from L-methionine: step 1/1. Functionally, catalyzes the formation of S-adenosylmethionine from methionine and ATP. This chain is S-adenosylmethionine synthase, found in Picrophilus torridus (strain ATCC 700027 / DSM 9790 / JCM 10055 / NBRC 100828 / KAW 2/3).